The sequence spans 297 residues: Phosphoribosylaminoimidazole-succinocarboxamide synthase (297 aa).

It belongs to the SAICAR synthetase family.

The enzyme catalyses 5-amino-1-(5-phospho-D-ribosyl)imidazole-4-carboxylate + L-aspartate + ATP = (2S)-2-[5-amino-1-(5-phospho-beta-D-ribosyl)imidazole-4-carboxamido]succinate + ADP + phosphate + 2 H(+). Its pathway is purine metabolism; IMP biosynthesis via de novo pathway; 5-amino-1-(5-phospho-D-ribosyl)imidazole-4-carboxamide from 5-amino-1-(5-phospho-D-ribosyl)imidazole-4-carboxylate: step 1/2. In Mycobacterium marinum (strain ATCC BAA-535 / M), this protein is Phosphoribosylaminoimidazole-succinocarboxamide synthase.